The following is a 259-amino-acid chain: Protein SODIUM POTASSIUM ROOT DEFECTIVE 2 (259 aa).

Residues 141–165 form a disordered region; that stretch reads PDSITGSVDQDPAKTVEAEAPAGED. Positions 151-165 are enriched in basic and acidic residues; it reads DPAKTVEAEAPAGED. The 67-residue stretch at 180–246 folds into the HMA domain; that stretch reads QQVVVLKVSL…KVKNAQFWTN (67 aa). Positions 191 and 194 each coordinate a metal cation.

This chain is Protein SODIUM POTASSIUM ROOT DEFECTIVE 2, found in Arabidopsis thaliana (Mouse-ear cress).